Here is a 937-residue protein sequence, read N- to C-terminus: MYFDAGESEDFCIQYSVLQDIGVTVSGNQDECANLDDELNLRTRFDFYSKRMDIFVSPKFVPRKKNGLAPIKLWDEGENALFTSYNFSEDYYHFKGDARDSYSQYANIQPRLNIGPWRIRTQAIWNKNNNTKGEWSNNYLYAERGLGNIKSRLYIGDGYFPLKNFNSFKFKGGVLKTDENMYPYSEKTYSPIVKGSAKTQAKVEFFQDGVKIYSSIVPPGDFSISDYILSGSNSDLYVKVIEENGSIQEFIVPFTYPAVAVREGFTYYEIAMGETQQSNDYFTQLSFTRGLPYDFTVLTSLEYSGFYRSLEIGLGKMLGNLGALSLIYGQSNFSKSDNSKNKKWDIRYNKNIPDLNTYLSFSAVSQTRGGYSSLRDALDYEIGEYTFNSKNSYTASINHSLGELGSLNFSGTWRNYWENKNQTRSYNLSYSTQIFNGKAYLSGSLIRSELMNFNNKISDTILNIGVNIPFGLSRGIQSVSYNTSSVKGGRSTHQLGISGSEFDNKLYWHVNQGYSDNYSNTSMYGYYKAKYAQVNAGYSVSERYNHAYGGIEGGILVYDGGIILGRNLGDTMSIIEAPGAENTKIRGWGSIETDWRGRAFIGYLSPYQNNDISLDPSSLPLDSSLDITTNSVIPTTGAIVKTTYNVKKGKKVMLTLKKSNGDAVPFGAIVTVMDGDQNTSIVGDNGQLYLGSSMDTGRLKVIWGNGEDKKCVVDYIVGDNKNIAGIYIGSAEHVFSSMLLYGKKISFLSASVWXVIGVVKAFLTTLQSNNEWRTHSEKNDFSIDFDVGVGRSFAAVGPTKDMSLGANLTSEPTLAIDFTPIENIYVGANYGKDIGTLVFTTNDLTDITLMSSRSVVDGRQTGFFTFMDSSATYKISTKLGSSNDVNIQEITQGAKITPVSGEKTLPKKFTLKLHAHRSSSTVPDTYTVGLNVTSNVI.

It belongs to the fimbrial export usher family. Post-translationally, a 97 kDa form of the protein is thought to be due to post-translational processing of isoform 104 kDa.

It is found in the cell outer membrane. Functionally, these proteins are essential for the biogenesis of mature CS3 pili, but not for synthesis of the CS3 pilin subunit. This Escherichia coli protein is Outer membrane usher protein CS3-2.